Reading from the N-terminus, the 38-residue chain is Photosystem II reaction center protein X 1 (38 aa).

A helical membrane pass occupies residues Phe8 to Phe28.

This sequence belongs to the PsbX family. Type 1 subfamily. PSII is composed of 1 copy each of membrane proteins PsbA, PsbB, PsbC, PsbD, PsbE, PsbF, PsbH, PsbI, PsbJ, PsbK, PsbL, PsbM, PsbT, PsbX, PsbY, PsbZ, Psb30/Ycf12, peripheral proteins PsbO, CyanoQ (PsbQ), PsbU, PsbV and a large number of cofactors. It forms dimeric complexes.

It is found in the cellular thylakoid membrane. Functionally, involved in the binding and/or turnover of quinones at the Q(B) site of photosystem II (PSII). PSII is a light-driven water plastoquinone oxidoreductase, using light energy to abstract electrons from H(2)O, generating a proton gradient subsequently used for ATP formation. This Synechococcus sp. (strain JA-3-3Ab) (Cyanobacteria bacterium Yellowstone A-Prime) protein is Photosystem II reaction center protein X 1.